We begin with the raw amino-acid sequence, 224 residues long: Cytidylate kinase (224 aa).

11–19 (GPAAAGKST) is a binding site for ATP.

This sequence belongs to the cytidylate kinase family. Type 1 subfamily.

It is found in the cytoplasm. The catalysed reaction is CMP + ATP = CDP + ADP. The enzyme catalyses dCMP + ATP = dCDP + ADP. The protein is Cytidylate kinase of Listeria monocytogenes serovar 1/2a (strain ATCC BAA-679 / EGD-e).